The primary structure comprises 318 residues: Ribosomal RNA small subunit methyltransferase H (318 aa).

Residues 34-36, Asp-53, Phe-82, Asp-103, and Gln-110 contribute to the S-adenosyl-L-methionine site; that span reads GGH.

The protein belongs to the methyltransferase superfamily. RsmH family.

The protein localises to the cytoplasm. The enzyme catalyses cytidine(1402) in 16S rRNA + S-adenosyl-L-methionine = N(4)-methylcytidine(1402) in 16S rRNA + S-adenosyl-L-homocysteine + H(+). Specifically methylates the N4 position of cytidine in position 1402 (C1402) of 16S rRNA. The polypeptide is Ribosomal RNA small subunit methyltransferase H (Limosilactobacillus reuteri (strain DSM 20016) (Lactobacillus reuteri)).